The chain runs to 377 residues: Exopolygalacturonase (377 aa).

Positions 1 to 5 are cleaved as a signal peptide; it reads RGVQS. PbH1 repeat units follow at residues 159 to 184, 186 to 207, 209 to 229, 239 to 260, and 269 to 290; these read CEDI…IHVG, SKGV…SIGP, SQNV…SIGS, VRGI…RVKT, and ATDL…ILDQ. D200 (proton donor) is an active-site residue. Residue N211 is glycosylated (N-linked (GlcNAc...) asparagine). H223 is an active-site residue. The N-linked (GlcNAc...) asparagine glycan is linked to N345.

This sequence belongs to the glycosyl hydrolase 28 family. Monomer. In terms of processing, glycosylated. As to expression, expressed in pollen (at protein level). Expressed in stem, but not in leaves (at protein level).

It localises to the secreted. The protein resides in the cell wall. It is found in the golgi apparatus. Its subcellular location is the endoplasmic reticulum. The protein localises to the vesicle. It carries out the reaction [(1-&gt;4)-alpha-D-galacturonosyl](n) + H2O = alpha-D-galacturonate + [(1-&gt;4)-alpha-D-galacturonosyl](n-1). Functionally, may function in depolymerizing pectin during pollen development, germination, and tube growth. Acts as an exo-polygalacturonase. The protein is Exopolygalacturonase of Platanus acerifolia (London plane tree).